A 460-amino-acid chain; its full sequence is Argininosuccinate lyase (460 aa).

This sequence belongs to the lyase 1 family. Argininosuccinate lyase subfamily.

It is found in the cytoplasm. It catalyses the reaction 2-(N(omega)-L-arginino)succinate = fumarate + L-arginine. Its pathway is amino-acid biosynthesis; L-arginine biosynthesis; L-arginine from L-ornithine and carbamoyl phosphate: step 3/3. This chain is Argininosuccinate lyase, found in Pelotomaculum thermopropionicum (strain DSM 13744 / JCM 10971 / SI).